Consider the following 203-residue polypeptide: ATP synthase subunit delta, chloroplastic (203 aa).

The protein belongs to the ATPase delta chain family. As to quaternary structure, F-type ATPases have 2 components, F(1) - the catalytic core - and F(0) - the membrane proton channel. F(1) has five subunits: alpha(3), beta(3), gamma(1), delta(1), epsilon(1). CF(0) has four main subunits: a(1), b(1), b'(1) and c(10-14). The alpha and beta chains form an alternating ring which encloses part of the gamma chain. F(1) is attached to F(0) by a central stalk formed by the gamma and epsilon chains, while a peripheral stalk is formed by the delta, b and b' chains.

The protein localises to the plastid. The protein resides in the chloroplast thylakoid membrane. F(1)F(0) ATP synthase produces ATP from ADP in the presence of a proton or sodium gradient. F-type ATPases consist of two structural domains, F(1) containing the extramembraneous catalytic core and F(0) containing the membrane proton channel, linked together by a central stalk and a peripheral stalk. During catalysis, ATP synthesis in the catalytic domain of F(1) is coupled via a rotary mechanism of the central stalk subunits to proton translocation. Its function is as follows. This protein is part of the stalk that links CF(0) to CF(1). It either transmits conformational changes from CF(0) to CF(1) or is implicated in proton conduction. The chain is ATP synthase subunit delta, chloroplastic from Heterosigma akashiwo (strain NIES-293 / 8280G21-1).